A 407-amino-acid polypeptide reads, in one-letter code: Serine/threonine transporter SstT (407 aa).

A run of 9 helical transmembrane segments spans residues 11–31 (IIHG…VILA), 43–63 (FLGD…VFVL), 82–102 (IISL…LLSF), 141–161 (ALMT…GIAL), 192–212 (LGIF…ALAG), 216–236 (LLMV…PLIV), 298–318 (MGGA…TLGV), 339–359 (ASGV…LFGI), and 363–383 (IAMQ…SAET).

Belongs to the dicarboxylate/amino acid:cation symporter (DAACS) (TC 2.A.23) family.

Its subcellular location is the cell inner membrane. The enzyme catalyses L-serine(in) + Na(+)(in) = L-serine(out) + Na(+)(out). The catalysed reaction is L-threonine(in) + Na(+)(in) = L-threonine(out) + Na(+)(out). Its function is as follows. Involved in the import of serine and threonine into the cell, with the concomitant import of sodium (symport system). This is Serine/threonine transporter SstT from Shewanella denitrificans (strain OS217 / ATCC BAA-1090 / DSM 15013).